The following is a 428-amino-acid chain: Putative gustatory receptor 2a (428 aa).

Residues methionine 1–tryptophan 40 lie on the Cytoplasmic side of the membrane. The helical transmembrane segment at leucine 41 to phenylalanine 61 threads the bilayer. At glutamine 62–arginine 145 the chain is on the extracellular side. The chain crosses the membrane as a helical span at residues alanine 146 to leucine 166. The Cytoplasmic portion of the chain corresponds to serine 167–proline 173. A helical transmembrane segment spans residues isoleucine 174–phenylalanine 194. The N-linked (GlcNAc...) asparagine glycan is linked to asparagine 195. The Extracellular segment spans residues asparagine 195–arginine 250. Residues valine 251–glycine 271 form a helical membrane-spanning segment. Topologically, residues asparagine 272 to glutamine 300 are cytoplasmic. The chain crosses the membrane as a helical span at residues isoleucine 301–leucine 321. Residues cysteine 322–asparagine 349 lie on the Extracellular side of the membrane. An N-linked (GlcNAc...) asparagine glycan is attached at asparagine 345. A helical membrane pass occupies residues alanine 350–isoleucine 370. Residues threonine 371–threonine 395 lie on the Cytoplasmic side of the membrane. The helical transmembrane segment at leucine 396–methionine 416 threads the bilayer. Residues serine 417–glutamine 428 lie on the Extracellular side of the membrane.

This sequence belongs to the insect chemoreceptor superfamily. Gustatory receptor (GR) family. Gr2a subfamily. Expressed in neurons of the terminal external chemosensory organ, the dorsal external chemosensory organ, as well as in the dorsal pharyngeal sense organ of larvae.

The protein resides in the cell membrane. Its function is as follows. Probable gustatory receptor which mediates acceptance or avoidance behavior, depending on its not yet determined substrates. This is Putative gustatory receptor 2a (Gr2a) from Drosophila melanogaster (Fruit fly).